Consider the following 183-residue polypeptide: ATP synthase subunit delta (183 aa).

The protein belongs to the ATPase delta chain family. In terms of assembly, F-type ATPases have 2 components, F(1) - the catalytic core - and F(0) - the membrane proton channel. F(1) has five subunits: alpha(3), beta(3), gamma(1), delta(1), epsilon(1). F(0) has three main subunits: a(1), b(2) and c(10-14). The alpha and beta chains form an alternating ring which encloses part of the gamma chain. F(1) is attached to F(0) by a central stalk formed by the gamma and epsilon chains, while a peripheral stalk is formed by the delta and b chains.

Its subcellular location is the cell inner membrane. In terms of biological role, f(1)F(0) ATP synthase produces ATP from ADP in the presence of a proton or sodium gradient. F-type ATPases consist of two structural domains, F(1) containing the extramembraneous catalytic core and F(0) containing the membrane proton channel, linked together by a central stalk and a peripheral stalk. During catalysis, ATP synthesis in the catalytic domain of F(1) is coupled via a rotary mechanism of the central stalk subunits to proton translocation. Its function is as follows. This protein is part of the stalk that links CF(0) to CF(1). It either transmits conformational changes from CF(0) to CF(1) or is implicated in proton conduction. The polypeptide is ATP synthase subunit delta (Verminephrobacter eiseniae (strain EF01-2)).